The chain runs to 204 residues: uncharacterized protein (204 aa).

A run of 4 helical transmembrane segments spans residues 21–50 (AWIV…LLFF), 92–114 (FFTA…WWWF), 150–172 (LGLR…VLSI), and 176–198 (LLAS…ETIL).

It localises to the cell membrane. This is an uncharacterized protein from Aquifex aeolicus (strain VF5).